A 200-amino-acid polypeptide reads, in one-letter code: 3-isopropylmalate dehydratase small subunit (200 aa).

Belongs to the LeuD family. LeuD type 1 subfamily. Heterodimer of LeuC and LeuD.

The enzyme catalyses (2R,3S)-3-isopropylmalate = (2S)-2-isopropylmalate. It functions in the pathway amino-acid biosynthesis; L-leucine biosynthesis; L-leucine from 3-methyl-2-oxobutanoate: step 2/4. Catalyzes the isomerization between 2-isopropylmalate and 3-isopropylmalate, via the formation of 2-isopropylmaleate. The protein is 3-isopropylmalate dehydratase small subunit of Arthrobacter sp. (strain FB24).